The sequence spans 294 residues: Pantothenate synthetase 3 (294 aa).

Residue 31 to 38 (MGALHEGH) participates in ATP binding. The active-site Proton donor is the H38. Q62 provides a ligand contact to (R)-pantoate. Q62 is a beta-alanine binding site. 154–157 (GEKD) serves as a coordination point for ATP. Q160 lines the (R)-pantoate pocket. 191-194 (LSSR) contacts ATP.

Belongs to the pantothenate synthetase family. In terms of assembly, homodimer.

It is found in the cytoplasm. It carries out the reaction (R)-pantoate + beta-alanine + ATP = (R)-pantothenate + AMP + diphosphate + H(+). Its pathway is cofactor biosynthesis; (R)-pantothenate biosynthesis; (R)-pantothenate from (R)-pantoate and beta-alanine: step 1/1. In terms of biological role, catalyzes the condensation of pantoate with beta-alanine in an ATP-dependent reaction via a pantoyl-adenylate intermediate. In Frankia alni (strain DSM 45986 / CECT 9034 / ACN14a), this protein is Pantothenate synthetase 3.